A 272-amino-acid chain; its full sequence is HMP-PP phosphatase (272 aa).

D8 serves as the catalytic Nucleophile. Mg(2+) is bound by residues D8, D10, and D212.

Belongs to the HAD-like hydrolase superfamily. Cof family. Requires Mg(2+) as cofactor.

It carries out the reaction 4-amino-2-methyl-5-(diphosphooxymethyl)pyrimidine + H2O = 4-amino-2-methyl-5-(phosphooxymethyl)pyrimidine + phosphate + H(+). Its function is as follows. Catalyzes the hydrolysis of 4-amino-2-methyl-5-hydroxymethylpyrimidine pyrophosphate (HMP-PP) to 4-amino-2-methyl-5-hydroxymethylpyrimidine phosphate (HMP-P). The polypeptide is HMP-PP phosphatase (Klebsiella pneumoniae (strain 342)).